The primary structure comprises 342 residues: D-erythrose-4-phosphate dehydrogenase (342 aa).

NAD(+) is bound at residue 11–12; that stretch reads RI. Substrate-binding positions include 153–155, Arg199, 212–213, and Arg235; these read SCT and TK. The Nucleophile role is filled by Cys154. Position 317 (Asn317) interacts with NAD(+).

This sequence belongs to the glyceraldehyde-3-phosphate dehydrogenase family. Epd subfamily. As to quaternary structure, homotetramer.

It localises to the cytoplasm. It catalyses the reaction D-erythrose 4-phosphate + NAD(+) + H2O = 4-phospho-D-erythronate + NADH + 2 H(+). It participates in cofactor biosynthesis; pyridoxine 5'-phosphate biosynthesis; pyridoxine 5'-phosphate from D-erythrose 4-phosphate: step 1/5. In terms of biological role, catalyzes the NAD-dependent conversion of D-erythrose 4-phosphate to 4-phosphoerythronate. The sequence is that of D-erythrose-4-phosphate dehydrogenase from Shewanella denitrificans (strain OS217 / ATCC BAA-1090 / DSM 15013).